The primary structure comprises 461 residues: tRNA modification GTPase MnmE (461 aa).

Residues arginine 23, glutamate 88, and arginine 127 each coordinate (6S)-5-formyl-5,6,7,8-tetrahydrofolate. The TrmE-type G domain maps to 223-382 (GLNTVIVGKP…VEEALVEIVY (160 aa)). Asparagine 233 is a binding site for K(+). Residues 233 to 238 (NVGKSS), 252 to 258 (TEVPGTT), and 277 to 280 (DTAG) each bind GTP. Serine 237 provides a ligand contact to Mg(2+). 3 residues coordinate K(+): threonine 252, valine 254, and threonine 257. Threonine 258 lines the Mg(2+) pocket. Lysine 461 contacts (6S)-5-formyl-5,6,7,8-tetrahydrofolate.

It belongs to the TRAFAC class TrmE-Era-EngA-EngB-Septin-like GTPase superfamily. TrmE GTPase family. In terms of assembly, homodimer. Heterotetramer of two MnmE and two MnmG subunits. It depends on K(+) as a cofactor.

It is found in the cytoplasm. Exhibits a very high intrinsic GTPase hydrolysis rate. Involved in the addition of a carboxymethylaminomethyl (cmnm) group at the wobble position (U34) of certain tRNAs, forming tRNA-cmnm(5)s(2)U34. This is tRNA modification GTPase MnmE from Alkaliphilus metalliredigens (strain QYMF).